Here is a 400-residue protein sequence, read N- to C-terminus: Subtilisin-like protease 1 (400 aa).

The first 20 residues, 1–20, serve as a signal peptide directing secretion; sequence MKFSQSLIALAACFLPLIAA. Positions 21-119 are excised as a propeptide; it reads APVEAQHAKI…IEMDGKVQAN (99 aa). One can recognise an Inhibitor I9 domain in the interval 42 to 117; the sequence is SYIVVFNKGV…AWIEMDGKVQ (76 aa). An N-linked (GlcNAc...) asparagine glycan is attached at Asn-82. The Peptidase S8 domain maps to 128–400; the sequence is TWGLGRISHK…NLIAYNGNGA (273 aa). Residues Asp-160, His-192, and Ser-345 each act as charge relay system in the active site.

Belongs to the peptidase S8 family.

Its subcellular location is the secreted. Its function is as follows. Major secreted subtilisin-like serine endopeptidase. Mediates the degradation of collagen, the major structural protein in the mammalian host. Degrades the nonhelical regions of collagen that function in the cross-linking of the helical components. May function as virulence factor involved in epidermal wing necrosis observed in white nose syndrome (WNS) in bats. In Pseudogymnoascus destructans (strain ATCC MYA-4855 / 20631-21) (Bat white-nose syndrome fungus), this protein is Subtilisin-like protease 1.